Reading from the N-terminus, the 267-residue chain is PHD finger protein ALFIN-LIKE 7 (267 aa).

A disordered region spans residues 162–207 (TKVSNGSSKSNKSNPKPSKQSNSNSKPAKPPQPKDEEDSGPEGTED). Residues 165–188 (SNGSSKSNKSNPKPSKQSNSNSKP) are compositionally biased toward low complexity. A compositionally biased stretch (acidic residues) spans 196–207 (DEEDSGPEGTED). Residues 211–263 (AYMCGACGETYANGEFWICCDVCEKWFHGKCVRITPAKAEHIKQYKCPGCSSK) form a PHD-type zinc finger.

Belongs to the Alfin family. As to quaternary structure, interacts with H3K4me3 and to a lesser extent with H3K4me2.

The protein resides in the nucleus. Functionally, histone-binding component that specifically recognizes H3 tails trimethylated on 'Lys-4' (H3K4me3), which mark transcription start sites of virtually all active genes. The chain is PHD finger protein ALFIN-LIKE 7 from Oryza sativa subsp. japonica (Rice).